The sequence spans 200 residues: Large ribosomal subunit protein bL9 (200 aa).

Belongs to the bacterial ribosomal protein bL9 family.

Binds to the 23S rRNA. This chain is Large ribosomal subunit protein bL9, found in Ruegeria pomeroyi (strain ATCC 700808 / DSM 15171 / DSS-3) (Silicibacter pomeroyi).